Here is a 78-residue protein sequence, read N- to C-terminus: Large ribosomal subunit protein bL28 (78 aa).

The disordered stretch occupies residues 1–29; it reads MSAHCQVTGRQPSFGKSVSHSHRRTSRRW.

This sequence belongs to the bacterial ribosomal protein bL28 family.

The sequence is that of Large ribosomal subunit protein bL28 from Corynebacterium efficiens (strain DSM 44549 / YS-314 / AJ 12310 / JCM 11189 / NBRC 100395).